A 307-amino-acid chain; its full sequence is Olfactory receptor 12D2 (307 aa).

Residues 1 to 23 lie on the Extracellular side of the membrane; sequence MLNTTSVTEFLLLGVTDIQELQP. The N-linked (GlcNAc...) asparagine glycan is linked to asparagine 3. A helical membrane pass occupies residues 24-44; that stretch reads FLFVVFLTIYFISVTGNGAVL. Residues 45–52 lie on the Cytoplasmic side of the membrane; sequence MIVISDPR. A helical membrane pass occupies residues 53–73; the sequence is LHSLMYFFLGNLSYLDICYST. The Extracellular portion of the chain corresponds to 74 to 97; sequence VTLPKMLQNFLSTHKAISFLGCIS. A disulfide bond links cysteine 95 and cysteine 187. A helical transmembrane segment spans residues 98-118; it reads QLHFFHSLGSTESMLFAVMAF. The Cytoplasmic segment spans residues 119–137; that stretch reads DLSVAICKPLRYTVIMNPQ. Residues 138–158 traverse the membrane as a helical segment; the sequence is LCTQMAITIWVIGFFHALLHS. The Extracellular segment spans residues 159-195; the sequence is VMTSRLNFCGSNRIHHFLCDIKPLLKLACGNTELNQW. Residues 196–215 traverse the membrane as a helical segment; sequence LLSTVTGTIAMGPFFLTLLS. Topologically, residues 216–236 are cytoplasmic; it reads YFYIITYLFFKTRSCSMLCKA. Residues 237–257 form a helical membrane-spanning segment; it reads LSTCASHFMVVILFYAPVLFT. Residues 258 to 270 are Extracellular-facing; it reads YIHPALESFMDQD. The helical transmembrane segment at 271-291 threads the bilayer; that stretch reads RIVAIMYTVVTPVLNPLIYTL. Over 292–307 the chain is Cytoplasmic; it reads RNKEVKGALGRVIRRL.

Belongs to the G-protein coupled receptor 1 family.

The protein resides in the cell membrane. In terms of biological role, odorant receptor. The polypeptide is Olfactory receptor 12D2 (OR12D2) (Homo sapiens (Human)).